Here is an 84-residue protein sequence, read N- to C-terminus: CDC42 small effector protein 2-A (84 aa).

Residues Cys-10 and Cys-11 are each lipidated (S-palmitoyl cysteine). One can recognise a CRIB domain in the interval 29 to 42 (IGEPTNFVHTAHVG).

The protein belongs to the CDC42SE/SPEC family.

It is found in the cytoplasm. The protein localises to the cytoskeleton. Its subcellular location is the cell membrane. In terms of biological role, probably involved in the organization of the actin cytoskeleton by acting downstream of CDC42, inducing actin filament assembly. The polypeptide is CDC42 small effector protein 2-A (cdc42se2-a) (Xenopus laevis (African clawed frog)).